The chain runs to 67 residues: Epsilon-conotoxin TxVA (67 aa).

An N-terminal signal peptide occupies residues 1–19; sequence MRCFPVFIILLLLIASAPC. Residues 20-50 constitute a propeptide that is removed on maturation; it reads FDARTKTDDDVPLSSLRDNLKRTIRTRLNIR. 4-carboxyglutamate is present on residues glutamate 51 and glutamate 54. 2 disulfides stabilise this stretch: cysteine 52–cysteine 58 and cysteine 53–cysteine 59. A 6'-bromotryptophan modification is found at tryptophan 57. O-linked (GalNAc...) threonine glycosylation occurs at threonine 60. The residue at position 63 (proline 63) is a 4-hydroxyproline. The propeptide occupies 64–67; that stretch reads LTGR.

O-glycan consists of the disaccharide Gal-GalNAc. Expressed by the venom duct.

The protein localises to the secreted. Its function is as follows. Epsilon-conotoxins act at presynaptic membranes, blocking the calcium channels or G protein-coupled receptors. Causes hyperactivity upon intracranial injection into mice. Causes dorsal fins drooping in fish. This Conus textile (Cloth-of-gold cone) protein is Epsilon-conotoxin TxVA.